We begin with the raw amino-acid sequence, 261 residues long: Phosphate import ATP-binding protein PstB (261 aa).

Residues 15-256 (LQVRRLNFYY…PAHQETENYI (242 aa)) form the ABC transporter domain. Residue 47–54 (GPSGCGKS) coordinates ATP.

It belongs to the ABC transporter superfamily. Phosphate importer (TC 3.A.1.7) family. The complex is composed of two ATP-binding proteins (PstB), two transmembrane proteins (PstC and PstA) and a solute-binding protein (PstS).

The protein resides in the cell inner membrane. It carries out the reaction phosphate(out) + ATP + H2O = ADP + 2 phosphate(in) + H(+). Part of the ABC transporter complex PstSACB involved in phosphate import. Responsible for energy coupling to the transport system. This chain is Phosphate import ATP-binding protein PstB, found in Burkholderia sp.